Here is a 187-residue protein sequence, read N- to C-terminus: MQDKNNLCWLDMEMTGLNPETDRIIEVAMIITDSDLNVLAQSEVYAVHQSDDVLNKMDEWNTATHGRTGLTQRVRESSHTEAEVEQKLLDFMSEWVPGRATPMCGNSIHQDRRFMVKYMPKLENYFHYRNLDVSTLKELAKRWNPPVAKSVVKRGSHKALDDILESIEEMRHYREHFLISAPRAEAQ.

In terms of domain architecture, Exonuclease spans 7 to 170 (LCWLDMEMTG…DDILESIEEM (164 aa)). The active site involves tyrosine 128.

The protein belongs to the oligoribonuclease family.

The protein resides in the cytoplasm. In terms of biological role, 3'-to-5' exoribonuclease specific for small oligoribonucleotides. The protein is Oligoribonuclease of Neisseria meningitidis serogroup B (strain ATCC BAA-335 / MC58).